A 139-amino-acid chain; its full sequence is Transthyretin-like protein 5 (139 aa).

Positions 1 to 15 are cleaved as a signal peptide; the sequence is MKLIILLCLVASSYA.

Belongs to the nematode transthyretin-like family.

Its subcellular location is the secreted. The sequence is that of Transthyretin-like protein 5 (ttr-5) from Caenorhabditis elegans.